The primary structure comprises 343 residues: Selenide, water dikinase (343 aa).

Residue C15 is part of the active site. Residues K18 and 46–48 (HKD) contribute to the ATP site. D49 lines the Mg(2+) pocket. ATP is bound by residues D66, D89, and 137 to 139 (GHS). D89 contacts Mg(2+). D225 is a binding site for Mg(2+).

It belongs to the selenophosphate synthase 1 family. Class I subfamily. As to quaternary structure, homodimer. It depends on Mg(2+) as a cofactor.

The enzyme catalyses hydrogenselenide + ATP + H2O = selenophosphate + AMP + phosphate + 2 H(+). Its function is as follows. Synthesizes selenophosphate from selenide and ATP. This chain is Selenide, water dikinase, found in Sulfurimonas denitrificans (strain ATCC 33889 / DSM 1251) (Thiomicrospira denitrificans (strain ATCC 33889 / DSM 1251)).